A 272-amino-acid chain; its full sequence is NADPH-dependent aldehyde reductase 2, chloroplastic (272 aa).

The N-terminal 53 residues, 1-53, are a transit peptide targeting the chloroplast; that stretch reads MAAASSVSSPPLCLAGRVAIVTGSSRGIGRAIAIHLAELGARVVVNYSTSPVE. 26 to 50 contributes to the NADP(+) binding site; the sequence is RGIGRAIAIHLAELGARVVVNYSTS. Serine 165 serves as a coordination point for substrate. The active-site Proton acceptor is the tyrosine 179.

It belongs to the short-chain dehydrogenases/reductases (SDR) family.

It is found in the plastid. The protein resides in the chloroplast. In terms of biological role, aldehyde reductase that catalyzes the reduction of the aldehyde carbonyl groups on saturated and alpha,beta-unsaturated aldehydes with more than 5 carbons. No activity on alpha,beta-unsaturated ketones. Can use propionaldehyde, butyraldehyde, methylglyoxal, (e)-2-pentenal, (E)-2-hexenal, (Z)-3-hexenal and (E)-2-nonenal as substrates, but not propenal (acrolein), crotonaldehyde, 2-butanone, 3-buten-2-one or 1-penten-3-one. This Arabidopsis thaliana (Mouse-ear cress) protein is NADPH-dependent aldehyde reductase 2, chloroplastic.